The following is a 313-amino-acid chain: Methionyl-tRNA formyltransferase (313 aa).

112-115 (SLLP) lines the (6S)-5,6,7,8-tetrahydrofolate pocket.

This sequence belongs to the Fmt family.

It carries out the reaction L-methionyl-tRNA(fMet) + (6R)-10-formyltetrahydrofolate = N-formyl-L-methionyl-tRNA(fMet) + (6S)-5,6,7,8-tetrahydrofolate + H(+). Attaches a formyl group to the free amino group of methionyl-tRNA(fMet). The formyl group appears to play a dual role in the initiator identity of N-formylmethionyl-tRNA by promoting its recognition by IF2 and preventing the misappropriation of this tRNA by the elongation apparatus. This chain is Methionyl-tRNA formyltransferase, found in Geotalea uraniireducens (strain Rf4) (Geobacter uraniireducens).